We begin with the raw amino-acid sequence, 807 residues long: Histone transcription regulator slm9 (807 aa).

2 WD repeats span residues 62 to 100 (SFDSPISCIRFTYDGSCLAVATEAGTFLYHSEKWDKAFQ) and 102 to 140 (LSGPAYEVCWSQQGHILATSWKQISIYVKDEGLRTETIV). The interval 144 to 164 (EHADSNHQPAVSIEESKEAVE) is disordered. 4 WD repeats span residues 182 to 221 (GHHTFVGGLAFDPMGQFLASQSFDHTLKVWKLSTFGVEKS), 230 to 273 (PTGN…YDIN), 276 to 322 (GHQG…PMAV), and 326 to 367 (LSCS…EKMD). Residues 388–437 (NKNAAADRTTSPTQGQPESPSKSILLRPPPSIASSPESKRRKCPKKFVAR) form a disordered region. A compositionally biased stretch (polar residues) spans 395–409 (RTTSPTQGQPESPSK). Phosphoserine is present on residues serine 406, serine 421, and serine 422. The span at 426-435 (KRRKCPKKFV) shows a compositional bias: basic residues. 2 WD repeats span residues 492-526 (DCSWFSYLPNAIVLANGTSVFWAVATEDSSIYIYS) and 528-574 (AGRL…AIHS).

This sequence belongs to the WD repeat HIR1 family. Interacts with hip1 and hip3.

The protein resides in the cytoplasm. The protein localises to the nucleus. In terms of biological role, probably required for replication-independent chromatin assembly. Required for transcriptional silencing in the outer repeat (otr) centromeric repeats and the Tf2 long terminal repeat retrotransposons. May play an indirect role in the regulation of cdc2 and/or wee1 at the G2/M stage of mitosis. The protein is Histone transcription regulator slm9 (slm9) of Schizosaccharomyces pombe (strain 972 / ATCC 24843) (Fission yeast).